The primary structure comprises 354 residues: Serum paraoxonase/arylesterase 2 (354 aa).

Cysteine 42 and cysteine 352 are disulfide-bonded. Positions 53 and 54 each coordinate Ca(2+). Residue histidine 114 is the Proton acceptor of the active site. Residues isoleucine 116, asparagine 167, aspartate 168, and asparagine 223 each contribute to the Ca(2+) site. Asparagine 254 carries an N-linked (GlcNAc...) asparagine glycan. Residues aspartate 268 and asparagine 269 each contribute to the Ca(2+) site. N-linked (GlcNAc...) asparagine glycans are attached at residues asparagine 269 and asparagine 323.

It belongs to the paraoxonase family. As to quaternary structure, homotrimer. The cofactor is Ca(2+). The signal sequence is not cleaved. In terms of tissue distribution, widely expressed with highest expression in liver, lung, placenta, testis and heart.

The protein localises to the membrane. The enzyme catalyses a phenyl acetate + H2O = a phenol + acetate + H(+). The catalysed reaction is an N-acyl-L-homoserine lactone + H2O = an N-acyl-L-homoserine + H(+). Capable of hydrolyzing lactones and a number of aromatic carboxylic acid esters. Has antioxidant activity. Is not associated with high density lipoprotein. Prevents LDL lipid peroxidation, reverses the oxidation of mildly oxidized LDL, and inhibits the ability of MM-LDL to induce monocyte chemotaxis. This chain is Serum paraoxonase/arylesterase 2 (PON2), found in Homo sapiens (Human).